Here is a 143-residue protein sequence, read N- to C-terminus: Ribosome-binding factor A (143 aa).

Residues 119–143 (KAKQQQFTPDTPDNSESVDGEKEQD) form a disordered region. Over residues 122 to 133 (QQQFTPDTPDNS) the composition is skewed to polar residues.

The protein belongs to the RbfA family. In terms of assembly, monomer. Binds 30S ribosomal subunits, but not 50S ribosomal subunits or 70S ribosomes.

The protein localises to the cytoplasm. In terms of biological role, one of several proteins that assist in the late maturation steps of the functional core of the 30S ribosomal subunit. Associates with free 30S ribosomal subunits (but not with 30S subunits that are part of 70S ribosomes or polysomes). Required for efficient processing of 16S rRNA. May interact with the 5'-terminal helix region of 16S rRNA. The sequence is that of Ribosome-binding factor A from Shewanella frigidimarina (strain NCIMB 400).